Here is a 107-residue protein sequence, read N- to C-terminus: Colipase (107 aa).

Positions 1–17 are cleaved as a signal peptide; the sequence is MEKVLVLLLVALSVAYA. Residues 18–22 constitute a propeptide, enterostatin, activation peptide; that stretch reads APGPR. Cystine bridges form between C34–C45, C40–C56, C44–C78, C66–C86, and C80–C104.

It belongs to the colipase family. In terms of assembly, forms a 1:1 stoichiometric complex with pancreatic lipase. In terms of tissue distribution, expressed by the pancreas.

It is found in the secreted. Functionally, colipase is a cofactor of pancreatic lipase. It allows the lipase to anchor itself to the lipid-water interface. Without colipase the enzyme is washed off by bile salts, which have an inhibitory effect on the lipase. Enterostatin has a biological activity as a satiety signal. The protein is Colipase (CLPS) of Oryctolagus cuniculus (Rabbit).